Consider the following 248-residue polypeptide: Deoxyribose-phosphate aldolase (248 aa).

Residue D117 is the Proton donor/acceptor of the active site. K179 serves as the catalytic Schiff-base intermediate with acetaldehyde. K208 functions as the Proton donor/acceptor in the catalytic mechanism.

Belongs to the DeoC/FbaB aldolase family. DeoC type 1 subfamily.

Its subcellular location is the cytoplasm. The catalysed reaction is 2-deoxy-D-ribose 5-phosphate = D-glyceraldehyde 3-phosphate + acetaldehyde. It participates in carbohydrate degradation; 2-deoxy-D-ribose 1-phosphate degradation; D-glyceraldehyde 3-phosphate and acetaldehyde from 2-deoxy-alpha-D-ribose 1-phosphate: step 2/2. Its function is as follows. Catalyzes a reversible aldol reaction between acetaldehyde and D-glyceraldehyde 3-phosphate to generate 2-deoxy-D-ribose 5-phosphate. The sequence is that of Deoxyribose-phosphate aldolase from Thermotoga petrophila (strain ATCC BAA-488 / DSM 13995 / JCM 10881 / RKU-1).